The chain runs to 497 residues: Ammonium transporter 1 (497 aa).

Topologically, residues 1-32 are extracellular; sequence MSSTTDATPTPSGVNGGDSMTVNLNQFYNNGD. A helical transmembrane segment spans residues 33–53; that stretch reads VAWILTSTALVFIMIPGVGFF. Over 54–63 the chain is Cytoplasmic; sequence YSGLARRRSA. Residues 64–84 form a helical membrane-spanning segment; it reads ISMLFLSMMSVAIVAFQWFFW. Topologically, residues 85–122 are extracellular; that stretch reads GYSLTFSHEGGPYIGSLANFGLRQTLGRPSSGASSVPD. The helical transmembrane segment at 123 to 143 threads the bilayer; sequence ILFCVFQGMFAAITPALAIGA. Residues 144 to 150 lie on the Cytoplasmic side of the membrane; sequence AADRGRM. The chain crosses the membrane as a helical span at residues 151-171; it reads FPCMVFMFLWTSIVYDPIAFW. Residues 172 to 187 are Extracellular-facing; sequence TWNPNGWLNKLGSYDF. The helical transmembrane segment at 188 to 208 threads the bilayer; it reads AGGSPVHISSGMAALAYSIVI. Topologically, residues 209 to 223 are cytoplasmic; it reads GKRCDHGTTKYRPHN. A helical membrane pass occupies residues 224–244; it reads VPHVVLGTVFLWFGWFGFNGG. Over 245–253 the chain is Extracellular; sequence SSAAANMRG. A helical membrane pass occupies residues 254-274; the sequence is VMAVVVTHLAASVGGIVWCVI. Over 275 to 281 the chain is Cytoplasmic; the sequence is DFAKNRH. The helical transmembrane segment at 282-302 threads the bilayer; the sequence is WSVVGFCEGAVAGLVAITPGS. Gly303 is a topological domain (extracellular). A helical transmembrane segment spans residues 304 to 324; it reads FVPPWAAVVIGALGAVFCYAA. Residues 325–338 lie on the Cytoplasmic side of the membrane; it reads TYLKKIIRVDDALD. A helical transmembrane segment spans residues 339–359; sequence IFAEHGVGGMVGNILTALFAA. At 360–394 the chain is on the extracellular side; sequence DYIEALDGSGTAYTGGWITHHYIQLGYQLADTVSC. The helical transmembrane segment at 395-415 threads the bilayer; the sequence is AAYSFAVSCALLFVMNYIPGL. Residues 416 to 497 are Cytoplasmic-facing; that stretch reads SLRVSREDEV…AESEAQAPAI (82 aa). The segment at 440-497 is disordered; sequence YKDSTDEPPPITTSGVQYTSPTVSDSASNEKEQEHRAQNEAQKEEEYRAESEAQAPAI. The span at 451–466 shows a compositional bias: polar residues; it reads TTSGVQYTSPTVSDSA. The span at 467–490 shows a compositional bias: basic and acidic residues; the sequence is SNEKEQEHRAQNEAQKEEEYRAES.

This sequence belongs to the ammonia transporter channel (TC 1.A.11.2) family.

It is found in the membrane. In terms of biological role, transporter for ammonium to use as a nitrogen source. Under ammonium limitation acts as an ammonium sensor, generating a signal that leads to pseudohyphal growth. This chain is Ammonium transporter 1 (amt1), found in Schizosaccharomyces pombe (strain 972 / ATCC 24843) (Fission yeast).